Consider the following 560-residue polypeptide: Membrane protein insertase YidC (560 aa).

The next 6 membrane-spanning stretches (helical) occupy residues 5 to 25, 334 to 354, 357 to 377, 431 to 451, 476 to 496, and 522 to 542; these read IINLIAAIILSLSIIFGWQYF, AIDFGWFYIITKPVFYAMNFF, YVGNFGVSILIVTVIIKLLMF, LPILVQIPVFFSIYKVLYVTI, LFGLLPFSPPSFLMIGAWPIL, and FMPLIFLFMFSSFPVGLLIYW.

This sequence belongs to the OXA1/ALB3/YidC family. Type 1 subfamily. Interacts with the Sec translocase complex via SecD. Specifically interacts with transmembrane segments of nascent integral membrane proteins during membrane integration.

It is found in the cell inner membrane. Its function is as follows. Required for the insertion and/or proper folding and/or complex formation of integral membrane proteins into the membrane. Involved in integration of membrane proteins that insert both dependently and independently of the Sec translocase complex, as well as at least some lipoproteins. Aids folding of multispanning membrane proteins. The chain is Membrane protein insertase YidC from Rickettsia conorii (strain ATCC VR-613 / Malish 7).